The primary structure comprises 96 residues: UPF0235 protein VP2619 (96 aa).

Belongs to the UPF0235 family.

The protein is UPF0235 protein VP2619 of Vibrio parahaemolyticus serotype O3:K6 (strain RIMD 2210633).